The primary structure comprises 1141 residues: Translocase of chloroplast 125, chloroplastic (1141 aa).

Disordered regions lie at residues 1-177 (MDAL…ISGY) and 325-431 (GFVE…EANE). Composition is skewed to basic and acidic residues over residues 57–72 (RVPE…KRDG) and 107–121 (IDGR…REDL). Residues 132 to 150 (YDDDDDDEEEEEDGSEEGE) show a composition bias toward acidic residues. Positions 151-167 (STSSSIINSEYSSSASN) are enriched in low complexity. Residues 328–353 (EAEEAESDVFTEGEDGYDDEDEDGDI) show a composition bias toward acidic residues. Composition is skewed to low complexity over residues 389 to 401 (RSSA…TTAT) and 408 to 429 (TASS…SSEA). The region spanning 505-734 (DFACTILVLG…KLQEASTPGK (230 aa)) is the AIG1-type G domain. A G1 region spans residues 514–521 (GKTGVGKS). 517–522 (GVGKSA) contacts GTP. Ser521 lines the Mg(2+) pocket. The interval 541–545 (STTKV) is G2. The interval 561-564 (DTPG) is G3. The G4 stretch occupies residues 633-636 (THAS). GTP is bound by residues His634 and 682 to 683 (EN). Residues 682 to 684 (ENH) form a G5 region. 2 disordered regions span residues 758-795 (QLKM…PFRP) and 832-871 (IRRR…AVPM). Over residues 770–789 (EDSDDDSDEEDEEEGDEYDD) the composition is skewed to acidic residues. A compositionally biased stretch (basic residues) spans 832 to 841 (IRRRRERKKQ). A helical transmembrane segment spans residues 1116-1136 (MVLIGIVPILRSLINCRFGFG).

The protein belongs to the TRAFAC class TrmE-Era-EngA-EngB-Septin-like GTPase superfamily. AIG1/Toc34/Toc159-like paraseptin GTPase family. TOC159 subfamily. Part of the TOC core complex. Requires Mg(2+) as cofactor.

It localises to the plastid. Its subcellular location is the chloroplast outer membrane. GTPase involved in protein precursor import into chloroplasts. Seems to recognize chloroplast-destined precursor proteins and regulate their presentation to the translocation channel through GTP hydrolysis. Probably specialized in the import of nuclear encoded non-photosynthetic preproteins from the cytoplasm to the chloroplast. In Physcomitrium patens (Spreading-leaved earth moss), this protein is Translocase of chloroplast 125, chloroplastic.